The sequence spans 80 residues: Nuclear protein 1 (80 aa).

Positions 40–80 are disordered; the sequence is GGRKGRTKREAAANTNRPSPGGHERKLLTKFQNSERKKAWR. A compositionally biased stretch (basic and acidic residues) spans 61-80; the sequence is GHERKLLTKFQNSERKKAWR. A Nuclear localization signal motif is present at residues 64 to 80; the sequence is RKLLTKFQNSERKKAWR.

Belongs to the NUPR family. In terms of assembly, monomer. Directly interacts with MSL1 and binds MORF4L1, two components of histone acetyltransferase complex; the interaction with MORF4L1 may be mediated by MSL1. Interacts with EP300; this interaction enhances the effect of EP300 on PAX2 transcription factor activity. Interacts with PAXIP1; this interaction prevents PAXIP1 inhibition of PAX2 transcription factor activity. Interacts with COPS5; this interaction allows COPS5-dependent CDKN1B nuclear to cytoplasm translocation. Interacts with RNF2. Interacts with FOXO3; this interaction represses FOXO3 transactivation. Interacts with PTMA; regulates apoptotic process. Interacts with MYOD1, EP300 and DDX5; this interaction coordinates the association of anti-proliferative and pro-myogenic proteins at the myogenin promoter. Interacts with TP53; interaction is stress-dependent. Forms a complex with EP300 and TP53; this complex binds CDKN1A promoter leading to transcriptional induction of CDKN1A. Post-translationally, phosphorylated. Phosphorylation promotes DNA-binding activity. In terms of processing, acetylated. In terms of tissue distribution, strongly activated in pancreatic acinar cells during the acute phase of pancreatitis, in developing pancreas and during pancreatic regeneration.

The protein resides in the nucleus. It is found in the cytoplasm. It localises to the perinuclear region. Functionally, transcription regulator that converts stress signals into a program of gene expression that empowers cells with resistance to the stress induced by a change in their microenvironment. Thereby participates in the regulation of many processes namely cell-cycle, apoptosis, autophagy and DNA repair responses. Controls cell cycle progression and protects cells from genotoxic stress induced by doxorubicin through the complex formation with TP53 and EP300 that binds CDKN1A promoter leading to transcriptional induction of CDKN1A. Protects pancreatic cancer cells from stress-induced cell death by binding the RELB promoter and activating its transcription, leading to IER3 transactivation. Negatively regulates apoptosis through interaction with PTMA. Inhibits autophagy-induced apoptosis in cardiac cells through FOXO3 interaction, inducing cytoplasmic translocation of FOXO3 thereby preventing the FOXO3 association with the pro-autophagic BNIP3 promoter. Inhibits cell growth and facilitates programmed cell death by apoptosis after adriamycin-induced DNA damage through transactivation of TP53. Regulates methamphetamine-induced apoptosis and autophagy through DDIT3-mediated endoplasmic reticulum stress pathway. Participates in DNA repair following gamma-irradiation by facilitating DNA access of the transcription machinery through interaction with MSL1 leading to inhibition of histone H4' Lys-16' acetylation (H4K16ac). Coactivator of PAX2 transcription factor activity, both by recruiting the EP300 cofactor to increase PAX2 transcription factor activity and by binding PAXIP1 to suppress PAXIP1-induced inhibition on PAX2. Positively regulates cell cycle progression through interaction with COPS5 inducing cytoplasmic translocation of CDKN1B leading to the CDKN1B degradation. Coordinates, through its interaction with EP300, the assiociation of MYOD1, EP300 and DDX5 to the MYOG promoter, leading to inhibition of cell-cycle progression and myogenic differentiation promotion. Negatively regulates beta cell proliferation via inhibition of cell-cycle regulatory genes expression through the suppression of their promoter activities. Also required for LHB expression and ovarian maturation. Exacerbates CNS inflammation and demyelination upon cuprizone treatment. The chain is Nuclear protein 1 from Rattus norvegicus (Rat).